The sequence spans 170 residues: NADH-quinone oxidoreductase subunit B (170 aa).

4 residues coordinate [4Fe-4S] cluster: cysteine 42, cysteine 43, cysteine 107, and cysteine 136.

It belongs to the complex I 20 kDa subunit family. As to quaternary structure, NDH-1 is composed of 14 different subunits. Subunits NuoB, C, D, E, F, and G constitute the peripheral sector of the complex. [4Fe-4S] cluster serves as cofactor.

The protein localises to the cell inner membrane. The catalysed reaction is a quinone + NADH + 5 H(+)(in) = a quinol + NAD(+) + 4 H(+)(out). Its function is as follows. NDH-1 shuttles electrons from NADH, via FMN and iron-sulfur (Fe-S) centers, to quinones in the respiratory chain. The immediate electron acceptor for the enzyme in this species is believed to be ubiquinone. Couples the redox reaction to proton translocation (for every two electrons transferred, four hydrogen ions are translocated across the cytoplasmic membrane), and thus conserves the redox energy in a proton gradient. This Campylobacter concisus (strain 13826) protein is NADH-quinone oxidoreductase subunit B.